The chain runs to 1064 residues: Leucine--tRNA ligase (1064 aa).

Positions 1–25 are disordered; the sequence is MARAMSETAEPGARTGAADTTVAPT. Positions 106-117 match the 'HIGH' region motif; that stretch reads PYPSGSGLHVGH. Positions 435–456 are disordered; the sequence is GRPGGGTEPADTAGPEAGADPA. The 'KMSKS' region motif lies at 831–835; it reads KMGKS. K834 is an ATP binding site.

This sequence belongs to the class-I aminoacyl-tRNA synthetase family.

It localises to the cytoplasm. It carries out the reaction tRNA(Leu) + L-leucine + ATP = L-leucyl-tRNA(Leu) + AMP + diphosphate. The polypeptide is Leucine--tRNA ligase (Frankia casuarinae (strain DSM 45818 / CECT 9043 / HFP020203 / CcI3)).